Reading from the N-terminus, the 281-residue chain is Alcohol dehydrogenase-related 31 kDa protein (281 aa).

Residue 11 to 34 (YVADCGGIALETSKVLMTKNIAKL) participates in NAD(+) binding. Ser139 serves as a coordination point for substrate. Tyr152 serves as the catalytic Proton acceptor.

Belongs to the short-chain dehydrogenases/reductases (SDR) family.

The protein is Alcohol dehydrogenase-related 31 kDa protein (Adhr) of Drosophila ambigua (Fruit fly).